The chain runs to 314 residues: Protein nutcracker (314 aa).

The segment at Met1–Gln62 is disordered. Positions Gln21–Gln34 are enriched in low complexity. Positions Met257–Ser314 are required for interaction with skpA and Cul1, but not with PI31. In terms of domain architecture, F-box spans Gln264–Leu309.

As to quaternary structure, component of an SCF (SKP1-CUL1-F-box protein) E3 ubiquitin-protein ligase complex, at least composed of ntc, skpA and Cul1. Interacts (via F-box domain) with skpA and Cul1. Interacts with Prosalpha7 and PI31. Interacts with Bruce. Expressed in testis (at protein level).

Its subcellular location is the cytoplasm. Its function is as follows. Functions together with PI31 to control non-apoptotic caspase activation during sperm individualization. Positively regulates PI31 stability. This chain is Protein nutcracker, found in Drosophila melanogaster (Fruit fly).